The primary structure comprises 44 residues: Iota-conotoxin-like R11.11 (44 aa).

Disulfide bonds link C5–C19, C12–C22, C18–C27, and C21–C36. A propeptide (removed by a carboxypeptidase) is located at residue R44.

It belongs to the conotoxin I1 superfamily. In terms of tissue distribution, expressed by the venom duct.

It is found in the secreted. Its function is as follows. Iota-conotoxins bind to voltage-gated sodium channels (Nav) and act as agonists by shifting the voltage-dependence of activation to more hyperpolarized levels. Produces general excitatory symptoms. In Conus radiatus (Rayed cone), this protein is Iota-conotoxin-like R11.11.